The primary structure comprises 137 residues: NADH-quinone oxidoreductase subunit A (137 aa).

The next 3 helical transmembrane spans lie at 12-32 (WGFA…LGLS), 66-86 (FYLV…LFAW), and 95-115 (WTGF…LVYL).

It belongs to the complex I subunit 3 family. NDH-1 is composed of 13 different subunits. Subunits NuoA, H, J, K, L, M, N constitute the membrane sector of the complex.

The protein localises to the cell inner membrane. The enzyme catalyses a quinone + NADH + 5 H(+)(in) = a quinol + NAD(+) + 4 H(+)(out). In terms of biological role, NDH-1 shuttles electrons from NADH, via FMN and iron-sulfur (Fe-S) centers, to quinones in the respiratory chain. The immediate electron acceptor for the enzyme in this species is believed to be ubiquinone. Couples the redox reaction to proton translocation (for every two electrons transferred, four hydrogen ions are translocated across the cytoplasmic membrane), and thus conserves the redox energy in a proton gradient. The sequence is that of NADH-quinone oxidoreductase subunit A from Pseudomonas putida (strain ATCC 700007 / DSM 6899 / JCM 31910 / BCRC 17059 / LMG 24140 / F1).